The chain runs to 789 residues: Mediator of RNA polymerase II transcription subunit 15 (789 aa).

An interaction with SREBF1 region spans residues 9-73; the sequence is DWRSAAFRQK…IHFRDIHNKK (65 aa). Disordered regions lie at residues 88-140 and 257-326; these read LTGG…APHG and QQQA…PLVS. Residues 89–102 are compositionally biased toward low complexity; that stretch reads TGGPTPGAAGIGMP. The span at 108 to 118 shows a compositional bias: gly residues; the sequence is QSLGGMGGLGA. 3 stretches are compositionally biased toward low complexity: residues 257 to 274, 282 to 291, and 302 to 326; these read QQQA…SMQQ, ALPQQLSQLH, and AQQS…PLVS. The residue at position 347 (Arg-347) is an Asymmetric dimethylarginine. Positions 404-531 are disordered; it reads RFPPTSTMSA…PAGSSQAEEQ (128 aa). Residues 407–426 are compositionally biased toward polar residues; that stretch reads PTSTMSAGPSSSISLGGQPT. A compositionally biased stretch (low complexity) spans 427–450; it reads TQVSQSSLTMLSSPSPGQQVQTPQ. The span at 451–463 shows a compositional bias: pro residues; that stretch reads SMPPPPQPSPQPG. Over residues 464–483 the composition is skewed to low complexity; it reads SQPNSNVSSGPAPSPSSFLP. 2 stretches are compositionally biased toward polar residues: residues 494 to 504 and 512 to 530; these read VTARTPQNFSV and TPVN…QAEE. The Nuclear localization signal signature appears at 548 to 565; the sequence is RRMINKIDKNEDRKKDLS. Thr-604 bears the Phosphothreonine mark.

Belongs to the Mediator complex subunit 15 family. In terms of assembly, component of the Mediator complex, which is composed of MED1, MED4, MED6, MED7, MED8, MED9, MED10, MED11, MED12, MED13, MED13L, MED14, MED15, MED16, MED17, MED18, MED19, MED20, MED21, MED22, MED23, MED24, MED25, MED26, MED27, MED29, MED30, MED31, CCNC, CDK8 and CDC2L6/CDK11. The MED12, MED13, CCNC and CDK8 subunits form a distinct module termed the CDK8 module. Mediator containing the CDK8 module is less active than Mediator lacking this module in supporting transcriptional activation. Individual preparations of the Mediator complex lacking one or more distinct subunits have been variously termed ARC, CRSP, DRIP, PC2, SMCC and TRAP. Interacts with SMAD2, SMAD3, SREBF1 and SREBF2. Interacts with WWTR1. Interacts with TRIM11. Ubiquitinated by TRIM11, leading to proteasomal degradation.

It is found in the cytoplasm. Its subcellular location is the nucleus. In terms of biological role, component of the Mediator complex, a coactivator involved in the regulated transcription of nearly all RNA polymerase II-dependent genes. Mediator functions as a bridge to convey information from gene-specific regulatory proteins to the basal RNA polymerase II transcription machinery. Mediator is recruited to promoters by direct interactions with regulatory proteins and serves as a scaffold for the assembly of a functional preinitiation complex with RNA polymerase II and the general transcription factors. Required for cholesterol-dependent gene regulation. Positively regulates the Nodal signaling pathway. The protein is Mediator of RNA polymerase II transcription subunit 15 (Med15) of Mus musculus (Mouse).